The primary structure comprises 164 residues: Cytochrome c-type biogenesis protein CcmE (164 aa).

Topologically, residues Met1–Arg8 are cytoplasmic. The helical; Signal-anchor for type II membrane protein transmembrane segment at Leu9–Ala29 threads the bilayer. The Periplasmic segment spans residues Leu30 to Ser164. The heme site is built by His130 and Tyr134. The span at Asp131 to Pro150 shows a compositional bias: basic and acidic residues. A disordered region spans residues Asp131–Ser164. Residues Tyr154 to Ser164 show a composition bias toward polar residues.

It belongs to the CcmE/CycJ family.

The protein localises to the cell inner membrane. Heme chaperone required for the biogenesis of c-type cytochromes. Transiently binds heme delivered by CcmC and transfers the heme to apo-cytochromes in a process facilitated by CcmF and CcmH. In Yersinia enterocolitica serotype O:8 / biotype 1B (strain NCTC 13174 / 8081), this protein is Cytochrome c-type biogenesis protein CcmE.